Here is a 288-residue protein sequence, read N- to C-terminus: ATP synthase gamma chain (288 aa).

The protein belongs to the ATPase gamma chain family. As to quaternary structure, F-type ATPases have 2 components, CF(1) - the catalytic core - and CF(0) - the membrane proton channel. CF(1) has five subunits: alpha(3), beta(3), gamma(1), delta(1), epsilon(1). CF(0) has three main subunits: a, b and c.

It localises to the cell inner membrane. Functionally, produces ATP from ADP in the presence of a proton gradient across the membrane. The gamma chain is believed to be important in regulating ATPase activity and the flow of protons through the CF(0) complex. The polypeptide is ATP synthase gamma chain (Glaesserella parasuis serovar 5 (strain SH0165) (Haemophilus parasuis)).